Here is an 847-residue protein sequence, read N- to C-terminus: Matrin-3 (847 aa).

The residue at position 2 (serine 2) is an N-acetylserine. At lysine 3 the chain carries N6-acetyllysine; alternate. Lysine 3 is covalently cross-linked (Glycyl lysine isopeptide (Lys-Gly) (interchain with G-Cter in SUMO2); alternate). Phosphoserine occurs at positions 4, 9, 11, 14, 22, 41, 118, and 126. Glycyl lysine isopeptide (Lys-Gly) (interchain with G-Cter in SUMO2) cross-links involve residues lysine 132 and lysine 146. Disordered stretches follow at residues 146–174 and 187–214; these read KRRR…YRVP and DSFD…SGYY. The residue at position 150 (threonine 150) is a Phosphothreonine. Serine 157 is modified (phosphoserine). Tyrosine 158 bears the Phosphotyrosine mark. Residues 160–174 are compositionally biased toward basic and acidic residues; the sequence is RDGRSATREPPYRVP. Phosphoserine occurs at positions 164, 188, and 195. Basic and acidic residues predominate over residues 201–214; it reads DYDHGSRSQESGYY. Tyrosine 202 carries the post-translational modification Phosphotyrosine. Phosphoserine is present on residues serine 206, serine 208, and serine 211. Residue tyrosine 219 is modified to Phosphotyrosine. Serine 234 is modified (phosphoserine). Residue lysine 245 forms a Glycyl lysine isopeptide (Lys-Gly) (interchain with G-Cter in SUMO2) linkage. Position 264 is a phosphoserine (serine 264). A Glycyl lysine isopeptide (Lys-Gly) (interchain with G-Cter in SUMO2) cross-link involves residue lysine 269. Phosphoserine is present on serine 275. Residues 342-394 form a disordered region; the sequence is PFMLQQSTNPAPGILGPPPPSFHLGGPAVGPRGNLGAGNGNLQGPRHMQKGRV. One can recognise an RRM 1 domain in the interval 398–473; that stretch reads RVVHIMDFQR…KPVRVHLSQK (76 aa). Residues lysine 478, lysine 487, and lysine 491 each participate in a glycyl lysine isopeptide (Lys-Gly) (interchain with G-Cter in SUMO2) cross-link. Positions 496–571 constitute an RRM 2 domain; the sequence is RVIHLSNLPH…RCVKVDLSEK (76 aa). 2 positions are modified to phosphoserine: serine 509 and serine 511. Residue lysine 515 forms a Glycyl lysine isopeptide (Lys-Gly) (interchain with G-Cter in SUMO2) linkage. Lysine 522 is modified (N6-acetyllysine; alternate). Lysine 522 is covalently cross-linked (Glycyl lysine isopeptide (Lys-Gly) (interchain with G-Cter in SUMO2); alternate). Serine 533 carries the post-translational modification Phosphoserine. Residues lysine 554 and lysine 555 each participate in a glycyl lysine isopeptide (Lys-Gly) (interchain with G-Cter in SUMO2) cross-link. Position 571 is an N6-acetyllysine (lysine 571). A disordered region spans residues 588 to 786; it reads KKDKSRKRSY…DEYRIGPYQP (199 aa). Residues serine 596, serine 598, serine 604, and serine 606 each carry the phosphoserine modification. Residues 600-643 are compositionally biased toward basic and acidic residues; sequence DGKESPSDKKSKTDGSQKTESSTEGKEQEEKSGEDGEKDTKDDQ. Residues lysine 617 and lysine 630 each participate in a glycyl lysine isopeptide (Lys-Gly) (interchain with G-Cter in SUMO2) cross-link. A compositionally biased stretch (acidic residues) spans 653–665; it reads ESEDELLVDEEEA. A phosphoserine mark is found at serine 654, serine 671, serine 673, and serine 674. Positions 666 to 676 are enriched in low complexity; the sequence is AALLESGSSVG. Threonine 679 is subject to Phosphothreonine. Phosphoserine is present on serine 689. Residues 689–704 show a composition bias toward basic and acidic residues; it reads SDGKKEPSDKAVKKDG. The Nuclear localization signal motif lies at 710-718; it reads AKKKLKKVD. Residues lysine 719 and lysine 736 each participate in a glycyl lysine isopeptide (Lys-Gly) (interchain with G-Cter in SUMO2) cross-link. Threonine 741 is modified (phosphothreonine). 3 positions are modified to phosphoserine: serine 747, serine 759, and serine 766. Residues 767–780 show a composition bias toward basic and acidic residues; it reads DENKDDYTIPDEYR. Residue lysine 770 forms a Glycyl lysine isopeptide (Lys-Gly) (interchain with G-Cter in SUMO2) linkage. A Matrin-type zinc finger spans residues 801–832; sequence FYCKLCSLFYTNEEVAKNTHCSSLPHYQKLKK. Lysine 836 bears the N6-acetyllysine; alternate mark. Residue lysine 836 forms a Glycyl lysine isopeptide (Lys-Gly) (interchain with G-Cter in SUMO2); alternate linkage.

As to quaternary structure, part of a complex consisting of SFPQ, NONO and MATR3. Interacts with AGO1 and AGO2. Part of a complex composed at least of ASH2L, EMSY, HCFC1, HSPA8, CCAR2, MATR3, MKI67, RBBP5, TUBB2A, WDR5 and ZNF335; this complex may have a histone H3-specific methyltransferase activity. Interacts with TARDBP. Part of the HDP-RNP complex composed of at least HEXIM1, PRKDC, XRCC5, XRCC6, paraspeckle proteins (SFPQ, NONO, PSPC1, RBM14, and MATR3) and NEAT1 RNA. Interacts with FUS. Interacts with IGF2BP1; the interaction is enhanced by SEPIN14P20 peptide RBPR. Interacts with IGF2BP2 and IGF2BP3. Interacts with RBPMS.

The protein resides in the nucleus matrix. Functionally, may play a role in transcription or may interact with other nuclear matrix proteins to form the internal fibrogranular network. In association with the SFPQ-NONO heteromer may play a role in nuclear retention of defective RNAs. Plays a role in the regulation of DNA virus-mediated innate immune response by assembling into the HDP-RNP complex, a complex that serves as a platform for IRF3 phosphorylation and subsequent innate immune response activation through the cGAS-STING pathway. Binds to N6-methyladenosine (m6A)-containing mRNAs and contributes to MYC stability by binding to m6A-containing MYC mRNAs. May bind to specific miRNA hairpins. This is Matrin-3 (MATR3) from Homo sapiens (Human).